A 272-amino-acid polypeptide reads, in one-letter code: Short-chain dehydrogenase reductase ATA1 (272 aa).

14–38 (IITGGARGIGAATARLFTENGAYVI) is a binding site for NADP(+). Position 143 (serine 143) interacts with substrate. Tyrosine 156 functions as the Proton acceptor in the catalytic mechanism. Residue lysine 160 coordinates NADP(+).

The protein belongs to the short-chain dehydrogenases/reductases (SDR) family. Expressed specifically in tapetal cells.

May play a role in tapetum development. In Arabidopsis thaliana (Mouse-ear cress), this protein is Short-chain dehydrogenase reductase ATA1.